The following is a 364-amino-acid chain: D-alanine--D-alanine ligase A (364 aa).

Residues 145–348 form the ATP-grasp domain; that stretch reads KRLLRDAGLN…YTDLITRLIE (204 aa). 175 to 230 provides a ligand contact to ATP; that stretch reads ESKLGLPLFVKPANQGSSVGVSKVTSEEQYTIAVDLAFEFDHKVIVEQGIKGREIE. Mg(2+)-binding residues include Asp302, Glu315, and Asn317.

It belongs to the D-alanine--D-alanine ligase family. Requires Mg(2+) as cofactor. It depends on Mn(2+) as a cofactor.

Its subcellular location is the cytoplasm. It catalyses the reaction 2 D-alanine + ATP = D-alanyl-D-alanine + ADP + phosphate + H(+). It participates in cell wall biogenesis; peptidoglycan biosynthesis. Cell wall formation. This Escherichia coli O6:H1 (strain CFT073 / ATCC 700928 / UPEC) protein is D-alanine--D-alanine ligase A.